Consider the following 215-residue polypeptide: Ependymin-1 (215 aa).

Positions 1–20 are cleaved as a signal peptide; the sequence is MHTVKLLCVVFSCLCAVAWA. N-linked (GlcNAc...) asparagine glycans are attached at residues Asn71 and Asn94.

Belongs to the ependymin family. Forms disulfide-linked dimers. Post-translationally, different glycosylation variants are known as EPD-beta and EPD-gamma. Binds calcium through the terminal sialic acids. As to expression, EPDs are synthesized in the meninx and secreted in the cerebrospinal fluid.

It is found in the secreted. Its function is as follows. May play a role in neural plasticity. May be involved during axon regeneration. In Carassius auratus (Goldfish), this protein is Ependymin-1 (epd1).